A 152-amino-acid chain; its full sequence is Endoribonuclease YbeY (152 aa).

His-113, His-117, and His-123 together coordinate Zn(2+).

The protein belongs to the endoribonuclease YbeY family. Zn(2+) is required as a cofactor.

Its subcellular location is the cytoplasm. Single strand-specific metallo-endoribonuclease involved in late-stage 70S ribosome quality control and in maturation of the 3' terminus of the 16S rRNA. The chain is Endoribonuclease YbeY from Acidovorax ebreus (strain TPSY) (Diaphorobacter sp. (strain TPSY)).